Consider the following 162-residue polypeptide: Phosphopantetheine adenylyltransferase (162 aa).

Ser11 contacts substrate. Residues 11–12 and His19 contribute to the ATP site; that span reads SF. Residues Lys43, Leu75, and Arg89 each coordinate substrate. Residues 90-92, Glu100, and 125-131 contribute to the ATP site; these read GLR and YSYLSSS.

This sequence belongs to the bacterial CoaD family. As to quaternary structure, homohexamer. It depends on Mg(2+) as a cofactor.

Its subcellular location is the cytoplasm. The catalysed reaction is (R)-4'-phosphopantetheine + ATP + H(+) = 3'-dephospho-CoA + diphosphate. It functions in the pathway cofactor biosynthesis; coenzyme A biosynthesis; CoA from (R)-pantothenate: step 4/5. In terms of biological role, reversibly transfers an adenylyl group from ATP to 4'-phosphopantetheine, yielding dephospho-CoA (dPCoA) and pyrophosphate. The protein is Phosphopantetheine adenylyltransferase of Geotalea uraniireducens (strain Rf4) (Geobacter uraniireducens).